The primary structure comprises 229 residues: Peptidase E (229 aa).

Catalysis depends on charge relay system residues serine 120, aspartate 135, and histidine 157.

It belongs to the peptidase S51 family.

It localises to the cytoplasm. The catalysed reaction is Dipeptidase E catalyzes the hydrolysis of dipeptides Asp-|-Xaa. It does not act on peptides with N-terminal Glu, Asn or Gln, nor does it cleave isoaspartyl peptides.. Hydrolyzes dipeptides containing N-terminal aspartate residues. May play a role in allowing the cell to use peptide aspartate to spare carbon otherwise required for the synthesis of the aspartate family of amino acids. This is Peptidase E (pepE) from Salmonella typhimurium (strain LT2 / SGSC1412 / ATCC 700720).